A 299-amino-acid chain; its full sequence is Coenzyme PQQ synthesis protein B (299 aa).

It belongs to the PqqB family.

The protein operates within cofactor biosynthesis; pyrroloquinoline quinone biosynthesis. Functionally, may be involved in the transport of PQQ or its precursor to the periplasm. This chain is Coenzyme PQQ synthesis protein B, found in Xanthomonas campestris pv. campestris (strain 8004).